The chain runs to 123 residues: Small ribosomal subunit protein uS12 (123 aa).

At Asp-89 the chain carries 3-methylthioaspartic acid.

Belongs to the universal ribosomal protein uS12 family. In terms of assembly, part of the 30S ribosomal subunit. Contacts proteins S8 and S17. May interact with IF1 in the 30S initiation complex.

Functionally, with S4 and S5 plays an important role in translational accuracy. In terms of biological role, interacts with and stabilizes bases of the 16S rRNA that are involved in tRNA selection in the A site and with the mRNA backbone. Located at the interface of the 30S and 50S subunits, it traverses the body of the 30S subunit contacting proteins on the other side and probably holding the rRNA structure together. The combined cluster of proteins S8, S12 and S17 appears to hold together the shoulder and platform of the 30S subunit. In Bradyrhizobium diazoefficiens (strain JCM 10833 / BCRC 13528 / IAM 13628 / NBRC 14792 / USDA 110), this protein is Small ribosomal subunit protein uS12.